Consider the following 67-residue polypeptide: Protein AaeX (67 aa).

A run of 2 helical transmembrane segments spans residues 3–23 and 43–63; these read LFPVIVVFGLSFPPIFFELLL and FVWHPALFNTALYCCLFYLIS.

The protein belongs to the AaeX family.

Its subcellular location is the cell membrane. The polypeptide is Protein AaeX (Escherichia coli O1:K1 / APEC).